The following is a 460-amino-acid chain: 4-O-methyl-glucuronoyl methylesterase (460 aa).

The first 17 residues, 1 to 17 (MASRFFALLLLAIPIQA), serve as a signal peptide directing secretion. Pyrrolidone carboxylic acid is present on glutamine 18. The region spanning 18 to 53 (QSPVWGQCGGIGWSGPTTCVGGATCVSYNPYYSQCI) is the CBM1 domain. Intrachain disulfides connect cysteine 96-cysteine 131, cysteine 277-cysteine 412, and cysteine 309-cysteine 384. The GXSYXG catalytic site motif signature appears at 276-281 (GCSRNG). Serine 278 functions as the Nucleophile in the catalytic mechanism. Residues lysine 282, glutamine 324, glutamate 332, and tryptophan 375 each coordinate substrate. Histidine 411 functions as the Proton donor/acceptor in the catalytic mechanism. Asparagine 447 is a glycosylation site (N-linked (GlcNAc...) asparagine).

It belongs to the carbohydrate esterase 15 (CE15) family.

Its subcellular location is the secreted. The catalysed reaction is a 4-O-methyl-alpha-D-glucuronosyl ester derivative + H2O = 4-O-methyl-alpha-D-glucuronate derivative + an alcohol + H(+). Its function is as follows. Glucuronoyl esterase which may play a significant role in biomass degradation, as it is considered to disconnect hemicellulose from lignin through the hydrolysis of the ester bond between 4-O-methyl-D-glucuronic acid residues of glucuronoxylans and aromatic alcohols of lignin. Does not hydrolyze substrates of other carbohydrate esterases such as acetylxylan esterase, acetyl esterase and feruloyl esterase. This chain is 4-O-methyl-glucuronoyl methylesterase, found in Hypocrea jecorina (strain QM6a) (Trichoderma reesei).